The primary structure comprises 295 residues: Small ribosomal subunit protein uS2 (295 aa).

Ser-2 is modified (N-acetylserine). Ser-43 is modified (phosphoserine). Position 52 is an N6-acetyllysine (Lys-52). An interaction with PPP1R16B region spans residues 54–113; it reads TWEKLLLAARAIVAIENPADVSVISSRNTGQRAVLKFAAATGATPIAGRFTPGTFTNQIQ. At Lys-89 the chain carries N6-acetyllysine; alternate. Lys-89 is covalently cross-linked (Glycyl lysine isopeptide (Lys-Gly) (interchain with G-Cter in SUMO2); alternate). Thr-97 is subject to Phosphothreonine. Laminin-binding stretches follow at residues 161–180 and 205–229; these read IPCN…MLAR and RDPE…EFQG. 5 [DE]-W-[ST] repeats span residues 230-232, 247-249, 266-268, 275-277, and 293-295; these read EWT, DWS, and EWS. Residues 242–295 form a laminin-binding region; that stretch reads QPEVADWSEGVQVPSVPIQQFPTEDWSAQPATEDWSAAPTAQATEWVGATTEWS. The interval 266 to 295 is disordered; it reads DWSAQPATEDWSAAPTAQATEWVGATTEWS.

This sequence belongs to the universal ribosomal protein uS2 family. Monomer (37LRP) and homodimer (67LR). Component of the small ribosomal subunit. Mature ribosomes consist of a small (40S) and a large (60S) subunit. The 40S subunit contains about 33 different proteins and 1 molecule of RNA (18S). The 60S subunit contains about 49 different proteins and 3 molecules of RNA (28S, 5.8S and 5S). Interacts with RPS21. Interacts with several laminins including at least LAMB1. Interacts with MDK. Interacts with PRNP. The mature dimeric form interacts with PPP1R16B (via its fourth ankyrin repeat). Interacts with PPP1CA only in the presence of PPP1R16B. Post-translationally, acylated. Acylation may be a prerequisite for conversion of the monomeric 37 kDa laminin receptor precursor (37LRP) to the mature dimeric 67 kDa laminin receptor (67LR), and may provide a mechanism for membrane association. In terms of processing, cleaved by stromelysin-3 (ST3) at the cell surface. Cleavage by stromelysin-3 may be a mechanism to alter cell-extracellular matrix interactions.

Its subcellular location is the cell membrane. It localises to the cytoplasm. The protein localises to the nucleus. In terms of biological role, required for the assembly and/or stability of the 40S ribosomal subunit. Required for the processing of the 20S rRNA-precursor to mature 18S rRNA in a late step of the maturation of 40S ribosomal subunits. Also functions as a cell surface receptor for laminin. Plays a role in cell adhesion to the basement membrane and in the consequent activation of signaling transduction pathways. May play a role in cell fate determination and tissue morphogenesis. Also acts as a receptor for several other ligands, including the pathogenic prion protein, viruses, and bacteria. Acts as a PPP1R16B-dependent substrate of PPP1CA. Enables malignant tumor cells to penetrate laminin tissue and vessel barriers. Activates precursor thymic anti-OFA/iLRP specific cytotoxic T-cell. May induce CD8 T-suppressor cells secreting IL-10. In Mus musculus (Mouse), this protein is Small ribosomal subunit protein uS2 (Rpsa).